A 78-amino-acid chain; its full sequence is MSSIEERVKKIVAEQLGVKEEEVKNEASFVEDLGADSLDTVELVMALEEEFETEIPDEEAEKITTVQLAINYINENLA.

Residues 2 to 77 form the Carrier domain; sequence SSIEERVKKI…LAINYINENL (76 aa). Position 37 is an O-(pantetheine 4'-phosphoryl)serine (serine 37).

The protein belongs to the acyl carrier protein (ACP) family. 4'-phosphopantetheine is transferred from CoA to a specific serine of apo-ACP by AcpS. This modification is essential for activity because fatty acids are bound in thioester linkage to the sulfhydryl of the prosthetic group.

It is found in the cytoplasm. It functions in the pathway lipid metabolism; fatty acid biosynthesis. Functionally, carrier of the growing fatty acid chain in fatty acid biosynthesis. This chain is Acyl carrier protein, found in Saccharophagus degradans (strain 2-40 / ATCC 43961 / DSM 17024).